The chain runs to 1132 residues: BTB/POZ domain-containing protein 7 (1132 aa).

Polar residues predominate over residues 1–10 (MGANASNYPH). Residues 1–24 (MGANASNYPHSCSPRVGGNSQAQQ) form a disordered region. Residue Gly-2 is the site of N-myristoyl glycine attachment. BTB domains follow at residues 142–211 (TDVD…GMED) and 247–341 (YDVV…DLSV). The region spanning 413–479 (YGSKWVHRQA…WGEHQLMKRI (67 aa)) is the BACK domain. Ser-722 is modified (phosphoserine). Disordered regions lie at residues 897–1019 (LSQS…HLHR) and 1035–1132 (QRSD…KSAL). A compositionally biased stretch (basic residues) spans 918–927 (RHTHTSRKKH). 4 stretches are compositionally biased toward basic and acidic residues: residues 928–939 (TLEQKTDTRENP), 1000–1019 (KKQE…HLHR), 1083–1093 (PEERSGRRLAD), and 1105–1114 (TDLEREDSIS). Position 1012 is a phosphoserine (Ser-1012).

The protein localises to the nucleus. Functionally, acts as a mediator of epithelial dynamics and organ branching by promoting cleft progression. Induced following accumulation of fibronectin in forming clefts, leading to local expression of the cell-scattering SNAIL2 and suppression of E-cadherin levels, thereby altering cell morphology and reducing cell-cell adhesion. This stimulates cell separation at the base of forming clefts by local, dynamic intercellular gap formation and promotes cleft progression. The protein is BTB/POZ domain-containing protein 7 (BTBD7) of Homo sapiens (Human).